The sequence spans 406 residues: tRNA-specific 2-thiouridylase MnmA (406 aa).

Residues Gly-42 to Ser-49 and Leu-68 contribute to the ATP site. Residue Cys-129 is the Nucleophile of the active site. Cys-129 and Cys-239 are disulfide-bonded. Gly-154 lines the ATP pocket. Residues Lys-189–Gln-191 form an interaction with tRNA region. The active-site Cysteine persulfide intermediate is the Cys-239. The segment at Arg-344–Tyr-345 is interaction with tRNA.

The protein belongs to the MnmA/TRMU family.

Its subcellular location is the cytoplasm. It carries out the reaction S-sulfanyl-L-cysteinyl-[protein] + uridine(34) in tRNA + AH2 + ATP = 2-thiouridine(34) in tRNA + L-cysteinyl-[protein] + A + AMP + diphosphate + H(+). In terms of biological role, catalyzes the 2-thiolation of uridine at the wobble position (U34) of tRNA, leading to the formation of s(2)U34. In Prochlorococcus marinus (strain SARG / CCMP1375 / SS120), this protein is tRNA-specific 2-thiouridylase MnmA.